The sequence spans 499 residues: uncharacterized protein (499 aa).

This is an uncharacterized protein from Methanothermobacter thermautotrophicus (Methanobacterium thermoformicicum).